The sequence spans 288 residues: 4-hydroxy-tetrahydrodipicolinate synthase (288 aa).

Position 42 (Thr42) interacts with pyruvate. Tyr129 serves as the catalytic Proton donor/acceptor. Lys157 functions as the Schiff-base intermediate with substrate in the catalytic mechanism. Ile198 is a binding site for pyruvate.

It belongs to the DapA family. Homotetramer; dimer of dimers.

The protein resides in the cytoplasm. It carries out the reaction L-aspartate 4-semialdehyde + pyruvate = (2S,4S)-4-hydroxy-2,3,4,5-tetrahydrodipicolinate + H2O + H(+). The protein operates within amino-acid biosynthesis; L-lysine biosynthesis via DAP pathway; (S)-tetrahydrodipicolinate from L-aspartate: step 3/4. Functionally, catalyzes the condensation of (S)-aspartate-beta-semialdehyde [(S)-ASA] and pyruvate to 4-hydroxy-tetrahydrodipicolinate (HTPA). The polypeptide is 4-hydroxy-tetrahydrodipicolinate synthase (Chlamydia abortus (strain DSM 27085 / S26/3) (Chlamydophila abortus)).